The primary structure comprises 367 residues: Phosphoribosylaminoimidazole-succinocarboxamide synthase (367 aa).

The protein belongs to the SAICAR synthetase family.

It catalyses the reaction 5-amino-1-(5-phospho-D-ribosyl)imidazole-4-carboxylate + L-aspartate + ATP = (2S)-2-[5-amino-1-(5-phospho-beta-D-ribosyl)imidazole-4-carboxamido]succinate + ADP + phosphate + 2 H(+). Its pathway is purine metabolism; IMP biosynthesis via de novo pathway; 5-amino-1-(5-phospho-D-ribosyl)imidazole-4-carboxamide from 5-amino-1-(5-phospho-D-ribosyl)imidazole-4-carboxylate: step 1/2. The polypeptide is Phosphoribosylaminoimidazole-succinocarboxamide synthase (Aliivibrio fischeri (strain MJ11) (Vibrio fischeri)).